Here is a 130-residue protein sequence, read N- to C-terminus: Glycine cleavage system H protein (130 aa).

A Lipoyl-binding domain is found at 22 to 103 (KAYIGISDCA…PYGSWIIAVE (82 aa)). Lys63 carries the N6-lipoyllysine modification.

The protein belongs to the GcvH family. In terms of assembly, the glycine cleavage system is composed of four proteins: P, T, L and H. (R)-lipoate is required as a cofactor.

Functionally, the glycine cleavage system catalyzes the degradation of glycine. The H protein shuttles the methylamine group of glycine from the P protein to the T protein. The polypeptide is Glycine cleavage system H protein (Clostridium botulinum (strain Kyoto / Type A2)).